A 914-amino-acid polypeptide reads, in one-letter code: Valine--tRNA ligase (914 aa).

The 'HIGH' region signature appears at 45–55 (PNVTGSLHMGH). The 'KMSKS' region signature appears at 538–542 (KMSKS). Lys-541 contacts ATP. Positions 847 to 914 (LVDLDALKGR…LARKRLADLS (68 aa)) form a coiled coil.

This sequence belongs to the class-I aminoacyl-tRNA synthetase family. ValS type 1 subfamily. Monomer.

The protein localises to the cytoplasm. The enzyme catalyses tRNA(Val) + L-valine + ATP = L-valyl-tRNA(Val) + AMP + diphosphate. Functionally, catalyzes the attachment of valine to tRNA(Val). As ValRS can inadvertently accommodate and process structurally similar amino acids such as threonine, to avoid such errors, it has a 'posttransfer' editing activity that hydrolyzes mischarged Thr-tRNA(Val) in a tRNA-dependent manner. The sequence is that of Valine--tRNA ligase from Parasynechococcus marenigrum (strain WH8102).